We begin with the raw amino-acid sequence, 1773 residues long: Disco-interacting protein 2 (1773 aa).

The region spanning 3 to 110 is the DMAP1-binding domain; it reads HTASLPGYVR…QRHSKKIDFH (108 aa). A phosphotyrosine mark is found at tyrosine 60 and tyrosine 61. Disordered regions lie at residues 112–185 and 198–319; these read QAAM…YHSE and LKGR…PLSS. 2 stretches are compositionally biased toward polar residues: residues 113 to 125 and 146 to 165; these read AAMS…QSGN and YQNT…NNSQ. Basic residues predominate over residues 166 to 175; that stretch reads HRQRRTQRKV. Basic and acidic residues predominate over residues 176–185; it reads THNEKRYHSE. The span at 224–236 shows a compositional bias: acidic residues; the sequence is DELDSSTDDESIP. The span at 241 to 253 shows a compositional bias: basic and acidic residues; the sequence is SPDKEYNYPRDHI. The segment covering 272 to 297 has biased composition (polar residues); it reads SMGSQQHARTDVKQNQITNQKYTAPN.

It belongs to the DIP2 family. Interacts with Disco. As to expression, expressed in the developing nervous system. Ubiquitously expressed in the developing brain. Within the mushroom body, a higher level is detected in the core of lobes and peduncle in the late third instar larva. Detected in whole mushroom body neuron structures at 48 hours after puparium formation and during later stages.

It localises to the cell membrane. Required for precise axonal bifurcation in mushroom body neurons by suppressing ectopic bifurcation and regulating the guidance of sister axons. May function by regulating expression of tdp1. Acts downstream of the serine/threonine-protein kinase Bsk to modulate the direction of axon projection. May play a role in fatty acid metabolism. This chain is Disco-interacting protein 2, found in Drosophila melanogaster (Fruit fly).